A 179-amino-acid chain; its full sequence is Sec-independent protein translocase protein TatB (179 aa).

A helical transmembrane segment spans residues 1–21; that stretch reads MFDLGFWEVLIIMLIGLLILG. Basic and acidic residues-rich tracts occupy residues 75-86 and 94-106; these read KDVEKNARRFEA and TFRD…DDAA. The disordered stretch occupies residues 75-179; that stretch reads KDVEKNARRF…QGGGGEEKRQ (105 aa).

The protein belongs to the TatB family. In terms of assembly, the Tat system comprises two distinct complexes: a TatABC complex, containing multiple copies of TatA, TatB and TatC subunits, and a separate TatA complex, containing only TatA subunits. Substrates initially bind to the TatABC complex, which probably triggers association of the separate TatA complex to form the active translocon.

It is found in the cell inner membrane. Functionally, part of the twin-arginine translocation (Tat) system that transports large folded proteins containing a characteristic twin-arginine motif in their signal peptide across membranes. Together with TatC, TatB is part of a receptor directly interacting with Tat signal peptides. TatB may form an oligomeric binding site that transiently accommodates folded Tat precursor proteins before their translocation. In Alkalilimnicola ehrlichii (strain ATCC BAA-1101 / DSM 17681 / MLHE-1), this protein is Sec-independent protein translocase protein TatB.